Consider the following 127-residue polypeptide: uncharacterized protein (127 aa).

An N-terminal signal peptide occupies residues 1–23; sequence MAGVRARAPLPLALLLSLPAAPG. A disordered region spans residues 43 to 127; it reads CFEVGLRKPP…ACPPRAPLWR (85 aa). A compositionally biased stretch (low complexity) spans 59–70; sequence PPSFSSGSSRPL.

It localises to the secreted. This is an uncharacterized protein from Homo sapiens (Human).